Here is a 274-residue protein sequence, read N- to C-terminus: MDALIGDFADFHKECSARTALHLVNGKFGKVSVWKHGPTQKSFFYKRIEHKHFNAIEPFVHHLMKFNKYFLRLFYSLHSLREHLLVMDYIPDGDLFDLMQTEPRLREPEISLIAYQLIDALQALHKHNVVHNDVKLENVLYRRFEQIYVCDYGLCKIAGSPSTFEGTVDYFSPEKINKHAAAVHFDWWAVGVLLYEISTGKHPFKLDQDESLDVETLHKRQIQLDVTFPADFDNPFLEEFICFLLGYCYDYRAHSYEVIQKNTYWKSIVHWKQR.

The region spanning 17-265 (ARTALHLVNG…YEVIQKNTYW (249 aa)) is the Protein kinase domain. Residues 23–31 (LVNGKFGKV) and Lys-46 each bind ATP. The active-site Proton acceptor is the Asp-133.

Belongs to the protein kinase superfamily. Ser/Thr protein kinase family.

It carries out the reaction L-seryl-[protein] + ATP = O-phospho-L-seryl-[protein] + ADP + H(+). The catalysed reaction is L-threonyl-[protein] + ATP = O-phospho-L-threonyl-[protein] + ADP + H(+). In vitro, can phosphorylate histone H1. The sequence is that of Serine/threonine-protein kinase 1 (PK1) from Lymantria dispar multicapsid nuclear polyhedrosis virus (LdMNPV).